The sequence spans 557 residues: Putative inactive polypeptide N-acetylgalactosaminyltransferase 11 (557 aa).

Residues 1 to 4 (MKSL) are Cytoplasmic-facing. A helical; Signal-anchor for type II membrane protein transmembrane segment spans residues 5–27 (LFGTPCSCAIFILVYCIITLFIW). Over 28–557 (FLYTDNLSNA…MRDICLSVNH (530 aa)) the chain is Lumenal. N-linked (GlcNAc...) asparagine glycans are attached at residues asparagine 33 and asparagine 103. 5 disulfide bridges follow: cysteine 99-cysteine 325, cysteine 316-cysteine 397, cysteine 437-cysteine 450, cysteine 472-cysteine 486, and cysteine 511-cysteine 526. The catalytic subdomain A stretch occupies residues 109 to 215 (TVTVSIVIAI…RGWLPPLLEP (107 aa)). The N-linked (GlcNAc...) asparagine glycan is linked to asparagine 220. The catalytic subdomain B stretch occupies residues 271-333 (PYPSSQLEGR…PCSRVGIIYK (63 aa)). An N-linked (GlcNAc...) asparagine glycan is attached at asparagine 379. Residues 456-557 (EDWTLTSRCQ…MRDICLSVNH (102 aa)) form the Ricin B-type lectin domain.

This sequence belongs to the glycosyltransferase 2 family. GalNAc-T subfamily.

The protein localises to the golgi apparatus membrane. Functionally, probable inactive glycosyltransferase. In Drosophila melanogaster (Fruit fly), this protein is Putative inactive polypeptide N-acetylgalactosaminyltransferase 11.